We begin with the raw amino-acid sequence, 342 residues long: N-acetyl-gamma-glutamyl-phosphate reductase (342 aa).

C147 is an active-site residue.

This sequence belongs to the NAGSA dehydrogenase family. Type 1 subfamily.

It localises to the cytoplasm. The catalysed reaction is N-acetyl-L-glutamate 5-semialdehyde + phosphate + NADP(+) = N-acetyl-L-glutamyl 5-phosphate + NADPH + H(+). The protein operates within amino-acid biosynthesis; L-arginine biosynthesis; N(2)-acetyl-L-ornithine from L-glutamate: step 3/4. Functionally, catalyzes the NADPH-dependent reduction of N-acetyl-5-glutamyl phosphate to yield N-acetyl-L-glutamate 5-semialdehyde. This chain is N-acetyl-gamma-glutamyl-phosphate reductase, found in Campylobacter jejuni subsp. jejuni serotype O:2 (strain ATCC 700819 / NCTC 11168).